The sequence spans 171 residues: Crossover junction endodeoxyribonuclease RuvC (171 aa).

Residues Asp7, Glu66, and Asp138 contribute to the active site. Mg(2+)-binding residues include Asp7, Glu66, and Asp138.

The protein belongs to the RuvC family. In terms of assembly, homodimer which binds Holliday junction (HJ) DNA. The HJ becomes 2-fold symmetrical on binding to RuvC with unstacked arms; it has a different conformation from HJ DNA in complex with RuvA. In the full resolvosome a probable DNA-RuvA(4)-RuvB(12)-RuvC(2) complex forms which resolves the HJ. Requires Mg(2+) as cofactor.

It localises to the cytoplasm. It catalyses the reaction Endonucleolytic cleavage at a junction such as a reciprocal single-stranded crossover between two homologous DNA duplexes (Holliday junction).. In terms of biological role, the RuvA-RuvB-RuvC complex processes Holliday junction (HJ) DNA during genetic recombination and DNA repair. Endonuclease that resolves HJ intermediates. Cleaves cruciform DNA by making single-stranded nicks across the HJ at symmetrical positions within the homologous arms, yielding a 5'-phosphate and a 3'-hydroxyl group; requires a central core of homology in the junction. The consensus cleavage sequence is 5'-(A/T)TT(C/G)-3'. Cleavage occurs on the 3'-side of the TT dinucleotide at the point of strand exchange. HJ branch migration catalyzed by RuvA-RuvB allows RuvC to scan DNA until it finds its consensus sequence, where it cleaves and resolves the cruciform DNA. The sequence is that of Crossover junction endodeoxyribonuclease RuvC from Thiobacillus denitrificans (strain ATCC 25259 / T1).